The primary structure comprises 351 residues: MSDPKANRMVSPERRSDDVGDTALRPQSLSDFVGQQQARKNLSIFIEAARKRGEALDHVLFVGPPGLGKTTLAQIVAKELGVGFRATSGPVIAKAGDLAALLTNLEERDVLFIDEIHRLSPAVEEVLYPAMEDFQLDLIIGEGPAARSVKIELSKFTLVGATTRAGLLTNPLRDRFGIPVRLNFYTIEELESIVSRGARVLNVGMSADGANEIARRARGTPRIAGRLLRRVRDFASAADADTIDRKIADHALSALEVDAAGLDAMDRRYLTTIAMNYGGGPVGVETMAAALSEPRDAIEDIIEPYLIQCGYLQRTPRGRLLTSHAFRHLGLAEPNRDAAQFGLFGTDESDD.

The tract at residues 1–22 is disordered; it reads MSDPKANRMVSPERRSDDVGDT. A large ATPase domain (RuvB-L) region spans residues 2–185; the sequence is SDPKANRMVS…FGIPVRLNFY (184 aa). ATP is bound by residues Leu-24, Arg-25, Gly-66, Lys-69, Thr-70, Thr-71, 132–134, Arg-175, Tyr-185, and Arg-222; that span reads EDF. Thr-70 contributes to the Mg(2+) binding site. A small ATPAse domain (RuvB-S) region spans residues 186 to 256; the sequence is TIEELESIVS…IADHALSALE (71 aa). Residues 259-351 form a head domain (RuvB-H) region; sequence AAGLDAMDRR…GLFGTDESDD (93 aa). DNA is bound by residues Arg-295, Arg-314, and Arg-319.

The protein belongs to the RuvB family. As to quaternary structure, homohexamer. Forms an RuvA(8)-RuvB(12)-Holliday junction (HJ) complex. HJ DNA is sandwiched between 2 RuvA tetramers; dsDNA enters through RuvA and exits via RuvB. An RuvB hexamer assembles on each DNA strand where it exits the tetramer. Each RuvB hexamer is contacted by two RuvA subunits (via domain III) on 2 adjacent RuvB subunits; this complex drives branch migration. In the full resolvosome a probable DNA-RuvA(4)-RuvB(12)-RuvC(2) complex forms which resolves the HJ.

Its subcellular location is the cytoplasm. It catalyses the reaction ATP + H2O = ADP + phosphate + H(+). The RuvA-RuvB-RuvC complex processes Holliday junction (HJ) DNA during genetic recombination and DNA repair, while the RuvA-RuvB complex plays an important role in the rescue of blocked DNA replication forks via replication fork reversal (RFR). RuvA specifically binds to HJ cruciform DNA, conferring on it an open structure. The RuvB hexamer acts as an ATP-dependent pump, pulling dsDNA into and through the RuvAB complex. RuvB forms 2 homohexamers on either side of HJ DNA bound by 1 or 2 RuvA tetramers; 4 subunits per hexamer contact DNA at a time. Coordinated motions by a converter formed by DNA-disengaged RuvB subunits stimulates ATP hydrolysis and nucleotide exchange. Immobilization of the converter enables RuvB to convert the ATP-contained energy into a lever motion, pulling 2 nucleotides of DNA out of the RuvA tetramer per ATP hydrolyzed, thus driving DNA branch migration. The RuvB motors rotate together with the DNA substrate, which together with the progressing nucleotide cycle form the mechanistic basis for DNA recombination by continuous HJ branch migration. Branch migration allows RuvC to scan DNA until it finds its consensus sequence, where it cleaves and resolves cruciform DNA. This is Holliday junction branch migration complex subunit RuvB from Bradyrhizobium diazoefficiens (strain JCM 10833 / BCRC 13528 / IAM 13628 / NBRC 14792 / USDA 110).